The primary structure comprises 252 residues: 5-oxoprolinase subunit A (252 aa).

Belongs to the LamB/PxpA family. In terms of assembly, forms a complex composed of PxpA, PxpB and PxpC.

It catalyses the reaction 5-oxo-L-proline + ATP + 2 H2O = L-glutamate + ADP + phosphate + H(+). Catalyzes the cleavage of 5-oxoproline to form L-glutamate coupled to the hydrolysis of ATP to ADP and inorganic phosphate. The sequence is that of 5-oxoprolinase subunit A from Chloroflexus aggregans (strain MD-66 / DSM 9485).